The following is a 380-amino-acid chain: Cysteine protease ATG4A (380 aa).

Catalysis depends on Cys-60, which acts as the Nucleophile. Residues Asp-262 and His-264 contribute to the active site. Residues 375–378 carry the LIR motif; the sequence is FEIL.

It belongs to the peptidase C54 family.

Its subcellular location is the cytoplasm. It catalyses the reaction [protein]-C-terminal L-amino acid-glycyl-phosphatidylethanolamide + H2O = [protein]-C-terminal L-amino acid-glycine + a 1,2-diacyl-sn-glycero-3-phosphoethanolamine. Cysteine protease that plays a key role in autophagy by mediating both proteolytic activation and delipidation of ATG8 family proteins. The protease activity is required for proteolytic activation of ATG8 family proteins: cleaves the C-terminal amino acid of ATG8 proteins to reveal a C-terminal glycine. Exposure of the glycine at the C-terminus is essential for ATG8 proteins conjugation to phosphatidylethanolamine (PE) and insertion to membranes, which is necessary for autophagy. Protease activity is also required to counteract formation of high-molecular weight conjugates of ATG8 proteins (ATG8ylation): acts as a deubiquitinating-like enzyme that removes ATG8 conjugated to other proteins, such as ATG3. In addition to the protease activity, also mediates delipidation of ATG8 family proteins. Catalyzes delipidation of PE-conjugated forms of ATG8 proteins during macroautophagy. The protein is Cysteine protease ATG4A of Gallus gallus (Chicken).